The following is a 466-amino-acid chain: Histidinol dehydrogenase, chloroplastic (466 aa).

Residues 1-30 (MSLNLSRLSLLSSPRISISTHAPRKGYVCC) constitute a chloroplast transit peptide. NAD(+)-binding residues include tyrosine 155, glutamine 217, and asparagine 240. Positions 266, 288, and 291 each coordinate substrate. Zn(2+)-binding residues include glutamine 288 and histidine 291. Active-site proton acceptor residues include glutamate 356 and histidine 357. 4 residues coordinate substrate: histidine 357, aspartate 390, glutamate 444, and histidine 449. Residue aspartate 390 participates in Zn(2+) binding. Histidine 449 provides a ligand contact to Zn(2+).

Belongs to the histidinol dehydrogenase family. Requires Zn(2+) as cofactor.

The protein localises to the plastid. It localises to the chloroplast. The enzyme catalyses L-histidinol + 2 NAD(+) + H2O = L-histidine + 2 NADH + 3 H(+). The protein operates within amino-acid biosynthesis; L-histidine biosynthesis; L-histidine from 5-phospho-alpha-D-ribose 1-diphosphate: step 9/9. In terms of biological role, catalyzes the sequential NAD-dependent oxidations of L-histidinol to L-histidinaldehyde and then to L-histidine. In Arabidopsis thaliana (Mouse-ear cress), this protein is Histidinol dehydrogenase, chloroplastic (HISN8).